The primary structure comprises 416 residues: MSTPLQGIKVLDFTGVQSGPSCTQMLAWFGADVIKIERPGFGDVTRHQLRDIPDIDALYFTMLNSNKRSIELNTKTAEGKEVMEKLIREADILVENFHPGAIDHMGFTWEHIQEINPRLIFGSIKGFDECSPYVNVKAYENVAQAAGGAASTTGFWDGPPLVSAAALGDSNTGMHLLIGLLAALLHREKTGRGQRVTMSMQDAVLNLCRVKLRDQQRLDKLGYLEEYPQYPNGTFGDAVPRGGNAGGGGQPGWILKCKGWETDPNAYIYFTIQEQNWENTCKAIGKPEWITDPAYSTAHARQPHIFDIFAEIEKYTVTIDKHEAVAYLTQFDIPCAPVLSMKEISLDPSLRQSGSVVEVEQPLRGKYLTVGCPMKFSAFTPDIKAAPLLGEHTAAVLQELGYSDDEIAAMKQNHAI.

CoA is bound by residues Q17 to S18, R38, L72 to K75, N96 to H98, H104, and K137 to E140. D169 acts as the Nucleophile in catalysis. G248 to Q250 is a binding site for substrate. Q273–Q275 serves as a coordination point for CoA.

It belongs to the CoA-transferase III family. Frc subfamily. Homodimer.

It carries out the reaction formyl-CoA + oxalate = oxalyl-CoA + formate. It participates in metabolic intermediate degradation; oxalate degradation; CO(2) and formate from oxalate: step 1/2. Involved in the catabolism of oxalate and in the adapatation to low pH via the induction of the oxalate-dependent acid tolerance response (ATR). Catalyzes the transfer of the CoA moiety from formyl-CoA to oxalate. The polypeptide is Formyl-CoA:oxalate CoA-transferase (Escherichia coli O81 (strain ED1a)).